A 346-amino-acid chain; its full sequence is Putative [LysW]-L-2-aminoadipate/[LysW]-L-glutamate phosphate reductase (346 aa).

Ser12–Thr15 serves as a coordination point for NADP(+). Cys147 is a catalytic residue. Asn310 serves as a coordination point for NADP(+).

The protein belongs to the NAGSA dehydrogenase family. Type 1 subfamily. LysY sub-subfamily.

The protein resides in the cytoplasm. It carries out the reaction [amino-group carrier protein]-C-terminal-N-(1-carboxy-5-oxopentan-1-yl)-L-glutamine + phosphate + NADP(+) = [amino-group carrier protein]-C-terminal-N-(1-carboxy-5-phosphooxy-5-oxopentan-1-yl)-L-glutamine + NADPH + H(+). The enzyme catalyses [amino-group carrier protein]-C-terminal-gamma-(L-glutamyl-5-semialdehyde)-L-glutamate + phosphate + NADP(+) = [amino-group carrier protein]-C-terminal-gamma-(5-phospho-L-glutamyl)-L-glutamate + NADPH + H(+). It participates in amino-acid biosynthesis; L-lysine biosynthesis via AAA pathway; L-lysine from L-alpha-aminoadipate (Thermus route): step 3/5. The protein operates within amino-acid biosynthesis; L-arginine biosynthesis. Its function is as follows. Involved in both the arginine and lysine biosynthetic pathways. In Natronomonas pharaonis (strain ATCC 35678 / DSM 2160 / CIP 103997 / JCM 8858 / NBRC 14720 / NCIMB 2260 / Gabara) (Halobacterium pharaonis), this protein is Putative [LysW]-L-2-aminoadipate/[LysW]-L-glutamate phosphate reductase.